A 727-amino-acid chain; its full sequence is ATP-dependent zinc metalloprotease FtsH (727 aa).

Over 1-6 the chain is Cytoplasmic; sequence MQKAFR. A helical membrane pass occupies residues 7-27; it reads NVLVIAIIGVIIFGVFSYING. The Extracellular segment spans residues 28 to 110; that stretch reads NGNTPKQLSY…KVKEEEKQSV (83 aa). The chain crosses the membrane as a helical span at residues 111-131; sequence FVSMLTTLIPVLIIAFLFIFF. Residues 132–727 are Cytoplasmic-facing; sequence LSQAQGGGGG…PNDPNNPSNR (596 aa). 205–212 lines the ATP pocket; it reads GPPGTGKT. H427 is a binding site for Zn(2+). Residue E428 is part of the active site. Positions 431 and 503 each coordinate Zn(2+). Composition is skewed to basic and acidic residues over residues 645 to 684 and 691 to 706; these read LEEGKEDMREDRKEDNDMNRERRHRQRDDRDNQTGHDQLR and NDQHRGHSNNEEDTGH. The tract at residues 645 to 727 is disordered; it reads LEEGKEDMRE…PNDPNNPSNR (83 aa). Low complexity predominate over residues 710-727; that stretch reads PNIDKPYNPNDPNNPSNR.

It in the central section; belongs to the AAA ATPase family. In the C-terminal section; belongs to the peptidase M41 family. As to quaternary structure, homohexamer. Zn(2+) is required as a cofactor.

It is found in the cell membrane. Functionally, acts as a processive, ATP-dependent zinc metallopeptidase for both cytoplasmic and membrane proteins. Plays a role in the quality control of integral membrane proteins. In Staphylococcus haemolyticus (strain JCSC1435), this protein is ATP-dependent zinc metalloprotease FtsH.